The primary structure comprises 292 residues: MNGIINLKKEAGMTSHDAVFKLRKILGTKKIGHGGTLDPDVVGVLPIAVGKATRMVEFMQDEGKVYEGEITLGYSTTTEDASGEVVAETPVLSPLDEKLVDEAIASLTGPITQIPPMYSAVKVNGRKLYEYARAGQEVKRPERQVTIYQFERTSPISYEGQLARFTFRVKCSKGTYIRTLSVDLGEKLGYAAHMSHLTRTSAAGMRLGDALTLEQIAERVAEEDYSFLQPLELGIGDLLKVELSDEQVEDVRNGRFISLVSDEAELAGFYGEKLVTILEKRKDQFKPRKVFL.

Catalysis depends on Asp-38, which acts as the Nucleophile.

This sequence belongs to the pseudouridine synthase TruB family. Type 1 subfamily.

The catalysed reaction is uridine(55) in tRNA = pseudouridine(55) in tRNA. Its function is as follows. Responsible for synthesis of pseudouridine from uracil-55 in the psi GC loop of transfer RNAs. This Streptococcus gordonii (strain Challis / ATCC 35105 / BCRC 15272 / CH1 / DL1 / V288) protein is tRNA pseudouridine synthase B.